A 761-amino-acid chain; its full sequence is uncharacterized protein (761 aa).

Met1 carries the post-translational modification N-acetylmethionine. Disordered regions lie at residues 1-82, 229-320, and 590-640; these read MEHQ…SSSS, SNII…SALA, and FNRA…PEQQ. Residues 13–27 show a composition bias toward polar residues; the sequence is NSGSNRVTVYNGTTL. The segment covering 28–45 has biased composition (low complexity); that stretch reads PTMPKSATPTSSSTTVTT. Composition is skewed to polar residues over residues 244 to 259, 266 to 276, 590 to 604, and 627 to 640; these read TPVS…SSPE, NTTSSSSTSDH, FNRA…STDD, and SKNS…PEQQ.

Post-translationally, phosphorylated by CDC28.

This is an uncharacterized protein from Saccharomyces cerevisiae (strain ATCC 204508 / S288c) (Baker's yeast).